A 204-amino-acid chain; its full sequence is MDFILNISMKMEVIFKTDLRSSSQVVFHAGSLYNWFSVEIINSGRIVTTAIKTLLSTVKYDIVKSAHIYAGQGYTEHQAQEEWNMILHVLFEEETESSASSESIHEKNDNETNECTSSFETLFEQEPSSEEPKDSKLYMLAQKTVQHIEQYGKAPDFNKVIRAHNFIQTIHGTPLKEEEKEVVRLMVIKLLKKNKLLSHLHLMF.

It belongs to the asfivirus phosphoprotein p30 family. In terms of assembly, oligomer. Interacts with host HNRNPK. In terms of processing, phosphorylated on serine residues in the 115 N-terminal amino acids.

The protein localises to the host cytoplasm. It is found in the host nucleus. It localises to the virion. Modifies the subcellular distribution of heterogeneous nuclear ribonucleoprotein K (HNRNPK) and may contribute to modulate HNRNPK functions related to processing and export of mRNAs during ASFV infection. Necessary for virus internalization. The sequence is that of Phosphoprotein p30 from African swine fever virus (strain Badajoz 1971 Vero-adapted) (Ba71V).